Here is a 523-residue protein sequence, read N- to C-terminus: Bifunctional purine biosynthesis protein PurH (523 aa).

In terms of domain architecture, MGS-like spans 1-152; that stretch reads MSTDDGRRPI…KNHPSAAVVT (152 aa).

This sequence belongs to the PurH family.

It carries out the reaction (6R)-10-formyltetrahydrofolate + 5-amino-1-(5-phospho-beta-D-ribosyl)imidazole-4-carboxamide = 5-formamido-1-(5-phospho-D-ribosyl)imidazole-4-carboxamide + (6S)-5,6,7,8-tetrahydrofolate. The enzyme catalyses IMP + H2O = 5-formamido-1-(5-phospho-D-ribosyl)imidazole-4-carboxamide. Its pathway is purine metabolism; IMP biosynthesis via de novo pathway; 5-formamido-1-(5-phospho-D-ribosyl)imidazole-4-carboxamide from 5-amino-1-(5-phospho-D-ribosyl)imidazole-4-carboxamide (10-formyl THF route): step 1/1. It participates in purine metabolism; IMP biosynthesis via de novo pathway; IMP from 5-formamido-1-(5-phospho-D-ribosyl)imidazole-4-carboxamide: step 1/1. The sequence is that of Bifunctional purine biosynthesis protein PurH from Mycobacterium bovis (strain BCG / Pasteur 1173P2).